A 372-amino-acid polypeptide reads, in one-letter code: Actin-related protein 2/3 complex subunit 1B (372 aa).

WD repeat units follow at residues 6-45 (FLVE…WVQV), 50-89 (EHNG…WKPT), 94-135 (RINR…WVCK), 140-179 (PIRS…VEER), 242-280 (SETL…GKLS), and 324-367 (LHKN…SALK).

It belongs to the WD repeat ARPC1 family. Component of the Arp2/3 complex composed of ACTR2/ARP2, ACTR3/ARP3, ARPC1B/p41-ARC, ARPC2/p34-ARC, ARPC3/p21-ARC, ARPC4/p20-ARC and ARPC5/p16-ARC.

The protein resides in the cytoplasm. It is found in the cytoskeleton. The protein localises to the nucleus. In terms of biological role, component of the Arp2/3 complex, a multiprotein complex that mediates actin polymerization upon stimulation by nucleation-promoting factor (NPF). The Arp2/3 complex mediates the formation of branched actin networks in the cytoplasm, providing the force for cell motility. In addition to its role in the cytoplasmic cytoskeleton, the Arp2/3 complex also promotes actin polymerization in the nucleus, thereby regulating gene transcription and repair of damaged DNA. The Arp2/3 complex promotes homologous recombination (HR) repair in response to DNA damage by promoting nuclear actin polymerization, leading to drive motility of double-strand breaks (DSBs). This is Actin-related protein 2/3 complex subunit 1B (ARPC1B) from Bos taurus (Bovine).